The primary structure comprises 405 residues: L-carnitine CoA-transferase (405 aa).

CoA is bound by residues Lys-97 and Arg-104. Catalysis depends on Asp-169, which acts as the Nucleophile.

It belongs to the CoA-transferase III family. CaiB subfamily. Homodimer.

The protein localises to the cytoplasm. It carries out the reaction crotonobetainyl-CoA + (R)-carnitine = crotonobetaine + (R)-carnitinyl-CoA. The catalysed reaction is 4-(trimethylamino)butanoyl-CoA + (R)-carnitine = (R)-carnitinyl-CoA + 4-(trimethylamino)butanoate. The protein operates within amine and polyamine metabolism; carnitine metabolism. Its function is as follows. Catalyzes the reversible transfer of the CoA moiety from gamma-butyrobetainyl-CoA to L-carnitine to generate L-carnitinyl-CoA and gamma-butyrobetaine. Is also able to catalyze the reversible transfer of the CoA moiety from gamma-butyrobetainyl-CoA or L-carnitinyl-CoA to crotonobetaine to generate crotonobetainyl-CoA. The chain is L-carnitine CoA-transferase from Salmonella gallinarum (strain 287/91 / NCTC 13346).